The chain runs to 669 residues: DNA ligase (669 aa).

Residues 31–35 (DAEYD), 80–81 (SL), and Glu-112 each bind NAD(+). Catalysis depends on Lys-114, which acts as the N6-AMP-lysine intermediate. Residues Arg-135, Glu-172, Lys-289, and Lys-313 each coordinate NAD(+). Zn(2+) is bound by residues Cys-407, Cys-410, Cys-425, and Cys-431. The BRCT domain maps to 591–669 (SVPQPLADKV…EEQLIEILNN (79 aa)).

Belongs to the NAD-dependent DNA ligase family. LigA subfamily. Mg(2+) is required as a cofactor. Requires Mn(2+) as cofactor.

The catalysed reaction is NAD(+) + (deoxyribonucleotide)n-3'-hydroxyl + 5'-phospho-(deoxyribonucleotide)m = (deoxyribonucleotide)n+m + AMP + beta-nicotinamide D-nucleotide.. Functionally, DNA ligase that catalyzes the formation of phosphodiester linkages between 5'-phosphoryl and 3'-hydroxyl groups in double-stranded DNA using NAD as a coenzyme and as the energy source for the reaction. It is essential for DNA replication and repair of damaged DNA. The chain is DNA ligase from Aliivibrio salmonicida (strain LFI1238) (Vibrio salmonicida (strain LFI1238)).